Here is a 156-residue protein sequence, read N- to C-terminus: Ribosome-binding factor A (156 aa).

The disordered stretch occupies residues 129 to 156 (AGEAQPYRVEEEPGDSEDETPPSSQDQR).

The protein belongs to the RbfA family. Monomer. Binds 30S ribosomal subunits, but not 50S ribosomal subunits or 70S ribosomes.

It is found in the cytoplasm. One of several proteins that assist in the late maturation steps of the functional core of the 30S ribosomal subunit. Associates with free 30S ribosomal subunits (but not with 30S subunits that are part of 70S ribosomes or polysomes). Required for efficient processing of 16S rRNA. May interact with the 5'-terminal helix region of 16S rRNA. The protein is Ribosome-binding factor A of Salinispora arenicola (strain CNS-205).